Reading from the N-terminus, the 780-residue chain is ATP-dependent 6-phosphofructokinase, liver type (780 aa).

A2 carries the post-translational modification N-acetylalanine. The interval 2-390 (ATVDLEKLRM…NWKIYKLLAH (389 aa)) is N-terminal catalytic PFK domain 1. Residues G25, 88–89 (RC), and 118–121 (GDGS) each bind ATP. A Mg(2+)-binding site is contributed by D119. Residues 164 to 166 (SID), R201, 208 to 210 (MGR), E264, R292, and 298 to 301 (HVQR) contribute to the substrate site. D166 serves as the catalytic Proton acceptor. S377 is subject to Phosphoserine. The interval 391 to 400 (QKVSKEKSNF) is interdomain linker. Residues 401 to 780 (SLAILNVGAP…RRTLSIDKGF (380 aa)) form a C-terminal regulatory PFK domain 2 region. Residues R470, 527–531 (TISNN), R565, 572–574 (MGG), and E628 each bind beta-D-fructose 2,6-bisphosphate. The O-linked (GlcNAc) serine glycan is linked to S529. Phosphotyrosine is present on Y640. Beta-D-fructose 2,6-bisphosphate contacts are provided by residues R654, 660 to 663 (HLQQ), and R734. Position 775 is a phosphoserine (S775).

The protein belongs to the phosphofructokinase type A (PFKA) family. ATP-dependent PFK group I subfamily. Eukaryotic two domain clade 'E' sub-subfamily. Homo- and heterotetramers. Phosphofructokinase (PFK) enzyme functions as a tetramer composed of different combinations of 3 types of subunits, called PFKM (M), PFKL (L) and PFKP (P). The composition of the PFK tetramer differs according to the tissue type it is present in. The kinetic and regulatory properties of the tetrameric enzyme are dependent on the subunit composition, hence can vary across tissues. Mg(2+) is required as a cofactor. Post-translationally, glcNAcylation at Ser-529 by OGT decreases enzyme activity, leading to redirect glucose flux through the oxidative pentose phosphate pathway. Glycosylation is stimulated by both hypoxia and glucose deprivation.

It localises to the cytoplasm. The enzyme catalyses beta-D-fructose 6-phosphate + ATP = beta-D-fructose 1,6-bisphosphate + ADP + H(+). It functions in the pathway carbohydrate degradation; glycolysis; D-glyceraldehyde 3-phosphate and glycerone phosphate from D-glucose: step 3/4. Allosterically activated by ADP, AMP, or fructose 2,6-bisphosphate, and allosterically inhibited by ATP or citrate. GlcNAcylation by OGT overcomes allosteric regulation. In terms of biological role, catalyzes the phosphorylation of D-fructose 6-phosphate to fructose 1,6-bisphosphate by ATP, the first committing step of glycolysis. Negatively regulates the phagocyte oxidative burst in response to bacterial infection by controlling cellular NADPH biosynthesis and NADPH oxidase-derived reactive oxygen species. Upon macrophage activation, drives the metabolic switch toward glycolysis, thus preventing glucose turnover that produces NADPH via pentose phosphate pathway. The sequence is that of ATP-dependent 6-phosphofructokinase, liver type from Mus musculus (Mouse).